The chain runs to 246 residues: UDP-N-acetyl-D-mannosaminuronic acid transferase (246 aa).

It belongs to the glycosyltransferase 26 family.

It carries out the reaction UDP-N-acetyl-alpha-D-mannosaminouronate + N-acetyl-alpha-D-glucosaminyl-di-trans,octa-cis-undecaprenyl diphosphate = beta-D-ManNAcA-(1-&gt;4)-alpha-D-GlcNAc-di-trans,octa-cis-undecaprenyl diphosphate + UDP + H(+). Its pathway is bacterial outer membrane biogenesis; enterobacterial common antigen biosynthesis. Its function is as follows. Catalyzes the synthesis of Und-PP-GlcNAc-ManNAcA (Lipid II), the second lipid-linked intermediate involved in enterobacterial common antigen (ECA) synthesis. This Escherichia coli O7:K1 (strain IAI39 / ExPEC) protein is UDP-N-acetyl-D-mannosaminuronic acid transferase.